Consider the following 65-residue polypeptide: Small, acid-soluble spore protein H 1 (65 aa).

Belongs to the SspH family.

It is found in the spore core. The sequence is that of Small, acid-soluble spore protein H 1 from Clostridium botulinum (strain Langeland / NCTC 10281 / Type F).